A 518-amino-acid chain; its full sequence is Glutamate--cysteine ligase (518 aa).

The protein belongs to the glutamate--cysteine ligase type 1 family. Type 1 subfamily.

It catalyses the reaction L-cysteine + L-glutamate + ATP = gamma-L-glutamyl-L-cysteine + ADP + phosphate + H(+). It functions in the pathway sulfur metabolism; glutathione biosynthesis; glutathione from L-cysteine and L-glutamate: step 1/2. This is Glutamate--cysteine ligase from Salmonella typhi.